The primary structure comprises 508 residues: Photosystem II CP47 reaction center protein (508 aa).

6 helical membrane passes run 21-36 (SVHI…WAGS), 101-115 (IVFS…IWHW), 140-156 (GIHL…FGAF), 203-218 (IAAG…FHLS), 237-252 (VLSS…AFVV), and 457-472 (SFAL…HGAR).

This sequence belongs to the PsbB/PsbC family. PsbB subfamily. PSII is composed of 1 copy each of membrane proteins PsbA, PsbB, PsbC, PsbD, PsbE, PsbF, PsbH, PsbI, PsbJ, PsbK, PsbL, PsbM, PsbT, PsbX, PsbY, PsbZ, Psb30/Ycf12, at least 3 peripheral proteins of the oxygen-evolving complex and a large number of cofactors. It forms dimeric complexes. The cofactor is Binds multiple chlorophylls. PSII binds additional chlorophylls, carotenoids and specific lipids..

It is found in the plastid. Its subcellular location is the chloroplast thylakoid membrane. Its function is as follows. One of the components of the core complex of photosystem II (PSII). It binds chlorophyll and helps catalyze the primary light-induced photochemical processes of PSII. PSII is a light-driven water:plastoquinone oxidoreductase, using light energy to abstract electrons from H(2)O, generating O(2) and a proton gradient subsequently used for ATP formation. The chain is Photosystem II CP47 reaction center protein from Platanus occidentalis (Sycamore).